Consider the following 464-residue polypeptide: 3-isopropylmalate dehydratase large subunit (464 aa).

[4Fe-4S] cluster contacts are provided by cysteine 337, cysteine 397, and cysteine 400.

Belongs to the aconitase/IPM isomerase family. LeuC type 1 subfamily. As to quaternary structure, heterodimer of LeuC and LeuD. It depends on [4Fe-4S] cluster as a cofactor.

The enzyme catalyses (2R,3S)-3-isopropylmalate = (2S)-2-isopropylmalate. The protein operates within amino-acid biosynthesis; L-leucine biosynthesis; L-leucine from 3-methyl-2-oxobutanoate: step 2/4. Functionally, catalyzes the isomerization between 2-isopropylmalate and 3-isopropylmalate, via the formation of 2-isopropylmaleate. The polypeptide is 3-isopropylmalate dehydratase large subunit (Bacillus cereus (strain AH820)).